Reading from the N-terminus, the 95-residue chain is DNA-directed RNA polymerase subunit omega (95 aa).

The protein belongs to the RNA polymerase subunit omega family. The RNAP catalytic core consists of 2 alpha, 1 beta, 1 beta' and 1 omega subunit. When a sigma factor is associated with the core the holoenzyme is formed, which can initiate transcription.

It carries out the reaction RNA(n) + a ribonucleoside 5'-triphosphate = RNA(n+1) + diphosphate. Promotes RNA polymerase assembly. Latches the N- and C-terminal regions of the beta' subunit thereby facilitating its interaction with the beta and alpha subunits. This Colwellia psychrerythraea (strain 34H / ATCC BAA-681) (Vibrio psychroerythus) protein is DNA-directed RNA polymerase subunit omega.